Consider the following 361-residue polypeptide: Aurora kinase B-A (361 aa).

One can recognise a Protein kinase domain in the interval 93–343; sequence FDIGRPLGKG…LKGVMEHPWV (251 aa). Residues 99-107 and Lys-122 each bind ATP; that span reads LGKGKFGNV. Asp-216 functions as the Proton acceptor in the catalytic mechanism.

This sequence belongs to the protein kinase superfamily. Ser/Thr protein kinase family. Aurora subfamily. As to quaternary structure, component of the CPC at least composed of survivin/birc5, incenp, cdca8/borealin and/or cdca9/dasra-A, and aurkb/aurora-B. Interacts directly (via N-terminus and kinase domain) with incenp (via C terminus), and may weakly interact (via N-terminus) with birc5.1 to stabilize the complex. Interacts with mtus1. The cofactor is Mg(2+). In terms of processing, phosphorylated, stimulates kinase activity.

The protein resides in the nucleus. Its subcellular location is the chromosome. The catalysed reaction is L-seryl-[protein] + ATP = O-phospho-L-seryl-[protein] + ADP + H(+). It carries out the reaction L-threonyl-[protein] + ATP = O-phospho-L-threonyl-[protein] + ADP + H(+). Its activity is regulated as follows. Kinase activity is stimulated by both birc5/survivin-binding and cell-cycle specific phosphorylation. Functionally, serine/threonine-protein kinase component of the chromosomal passenger complex (CPC), a complex that acts as a key regulator of mitosis. The CPC complex has essential functions at the centromere in ensuring correct chromosome alignment and segregation and is required for chromatin-induced microtubule stabilization and spindle assembly. Involved in the bipolar attachment of spindle microtubules to kinetochores and is a key regulator for the onset of cytokinesis during mitosis. Required for central/midzone spindle assembly and cleavage furrow formation. Key component of the cytokinesis checkpoint, a process required to delay abscission to prevent both premature resolution of intercellular chromosome bridges and accumulation of DNA damage. Phosphorylates 'Ser-10' of histone H3 during mitosis. The sequence is that of Aurora kinase B-A (aurkb-a) from Xenopus laevis (African clawed frog).